Here is a 70-residue protein sequence, read N- to C-terminus: ATP synthase subunit c (70 aa).

Helical transmembrane passes span 4 to 24 (IAAA…NGLI) and 45 to 65 (IMFI…VIAF).

This sequence belongs to the ATPase C chain family. In terms of assembly, F-type ATPases have 2 components, F(1) - the catalytic core - and F(0) - the membrane proton channel. F(1) has five subunits: alpha(3), beta(3), gamma(1), delta(1), epsilon(1). F(0) has three main subunits: a(1), b(2) and c(10-14). The alpha and beta chains form an alternating ring which encloses part of the gamma chain. F(1) is attached to F(0) by a central stalk formed by the gamma and epsilon chains, while a peripheral stalk is formed by the delta and b chains.

Its subcellular location is the cell membrane. F(1)F(0) ATP synthase produces ATP from ADP in the presence of a proton or sodium gradient. F-type ATPases consist of two structural domains, F(1) containing the extramembraneous catalytic core and F(0) containing the membrane proton channel, linked together by a central stalk and a peripheral stalk. During catalysis, ATP synthesis in the catalytic domain of F(1) is coupled via a rotary mechanism of the central stalk subunits to proton translocation. Functionally, key component of the F(0) channel; it plays a direct role in translocation across the membrane. A homomeric c-ring of between 10-14 subunits forms the central stalk rotor element with the F(1) delta and epsilon subunits. The polypeptide is ATP synthase subunit c (Staphylococcus aureus (strain Mu3 / ATCC 700698)).